The following is a 430-amino-acid chain: Adenylosuccinate synthetase (430 aa).

GTP contacts are provided by residues 12–18 (GDEGKGK) and 40–42 (GHT). The active-site Proton acceptor is the D13. Mg(2+) is bound by residues D13 and G40. Residues 13-16 (DEGK), 38-41 (NAGH), T128, R142, Q223, T238, and R302 contribute to the IMP site. The Proton donor role is filled by H41. 298–304 (TTTGRPR) is a binding site for substrate. GTP is bound by residues R304, 330-332 (SID), and 412-414 (SVG).

Belongs to the adenylosuccinate synthetase family. In terms of assembly, homodimer. Requires Mg(2+) as cofactor.

It localises to the cytoplasm. It carries out the reaction IMP + L-aspartate + GTP = N(6)-(1,2-dicarboxyethyl)-AMP + GDP + phosphate + 2 H(+). The protein operates within purine metabolism; AMP biosynthesis via de novo pathway; AMP from IMP: step 1/2. Plays an important role in the de novo pathway of purine nucleotide biosynthesis. Catalyzes the first committed step in the biosynthesis of AMP from IMP. This Streptococcus sanguinis (strain SK36) protein is Adenylosuccinate synthetase.